Consider the following 361-residue polypeptide: Prostaglandin E2 receptor EP2 subtype (361 aa).

The span at 1–10 (MGSISNNSGS) shows a compositional bias: polar residues. A disordered region spans residues 1 to 21 (MGSISNNSGSEDCESREWLPS). At 1 to 23 (MGSISNNSGSEDCESREWLPSGE) the chain is on the extracellular side. Asn-6 carries N-linked (GlcNAc...) asparagine glycosylation. The chain crosses the membrane as a helical span at residues 24-47 (SPAISSAMFSAGVLGNLIALALLA). The Cytoplasmic portion of the chain corresponds to 48 to 65 (RRWRGDAGRRAGRGNSIS). The helical transmembrane segment at 66 to 91 (LFHVLVTELVFTDLLGTCLISPVVLA) threads the bilayer. Residues 92-111 (SYARNQTLMALEPERRACTY) lie on the Extracellular side of the membrane. N-linked (GlcNAc...) asparagine glycosylation occurs at Asn-96. Cys-109 and Cys-187 are disulfide-bonded. The chain crosses the membrane as a helical span at residues 112-132 (FAFAMTFFSLATMLMLFAMAL). The Cytoplasmic segment spans residues 133-151 (ERYLSIGRPYFYQRHVTRR). A helical transmembrane segment spans residues 152–176 (GGLAVLPTIYTVSLLFCSLPLLGYG). Topologically, residues 177-198 (QYVQYCPGTWCFIRHGRTAYLQ) are extracellular. A helical transmembrane segment spans residues 199–223 (LYATLLLLLIVAVLACNFSVILNLI). At 224 to 262 (RMHRRSGRSRCGPSLGSCRDGSGTRRRGERVSVAEETDH) the chain is on the cytoplasmic side. Residues 230–253 (GRSRCGPSLGSCRDGSGTRRRGER) form a disordered region. Residues 263 to 286 (LILLAIMTITFAICSLPFTIFAYM) traverse the membrane as a helical segment. Asn-287 carries N-linked (GlcNAc...) asparagine glycosylation. At 287–299 (NETSSRREKWDLQ) the chain is on the extracellular side. The helical transmembrane segment at 300–323 (ALRFLSINSIIDPWVFAIFRPPVL) threads the bilayer. Over 324–361 (RLMRSVLCCRVSLRAQDATQTSCSIQSNASRLTFVDTS) the chain is Cytoplasmic.

This sequence belongs to the G-protein coupled receptor 1 family.

It localises to the cell membrane. Receptor for prostaglandin E2 (PGE2). The activity of this receptor is mediated by G(s) proteins that stimulate adenylate cyclase. The subsequent raise in intracellular cAMP is responsible for the relaxing effect of this receptor on smooth muscle. This Canis lupus familiaris (Dog) protein is Prostaglandin E2 receptor EP2 subtype (PTGER2).